The sequence spans 633 residues: Phosphomethylpyrimidine synthase (633 aa).

Substrate-binding positions include asparagine 245, methionine 274, tyrosine 303, histidine 339, 359-361 (SRG), 400-403 (DGLR), and glutamate 439. Residue histidine 443 coordinates Zn(2+). Tyrosine 466 is a substrate binding site. Histidine 507 provides a ligand contact to Zn(2+). [4Fe-4S] cluster is bound by residues cysteine 587, cysteine 590, and cysteine 595.

Belongs to the ThiC family. As to quaternary structure, homodimer. [4Fe-4S] cluster serves as cofactor.

It carries out the reaction 5-amino-1-(5-phospho-beta-D-ribosyl)imidazole + S-adenosyl-L-methionine = 4-amino-2-methyl-5-(phosphooxymethyl)pyrimidine + CO + 5'-deoxyadenosine + formate + L-methionine + 3 H(+). It participates in cofactor biosynthesis; thiamine diphosphate biosynthesis. Catalyzes the synthesis of the hydroxymethylpyrimidine phosphate (HMP-P) moiety of thiamine from aminoimidazole ribotide (AIR) in a radical S-adenosyl-L-methionine (SAM)-dependent reaction. The chain is Phosphomethylpyrimidine synthase from Neisseria meningitidis serogroup B (strain ATCC BAA-335 / MC58).